Reading from the N-terminus, the 340-residue chain is Chitinase 7 (340 aa).

The signal sequence occupies residues 1–32 (MIAARAANLQVAMKALALAVLALAYAAATARA). The Chitin-binding type-1 domain maps to 33–73 (EQCGRQAGGARCPNRLCCSRWGWCGLTDDYCKGGCQSQCRV). Disulfide bonds link Cys35/Cys50, Cys44/Cys56, Cys49/Cys63, Cys67/Cys71, Cys118/Cys173, Cys185/Cys193, and Cys293/Cys323.

It belongs to the glycosyl hydrolase 19 family. Chitinase class I subfamily. As to expression, expressed in pistils, stamens and lodicules.

It carries out the reaction Random endo-hydrolysis of N-acetyl-beta-D-glucosaminide (1-&gt;4)-beta-linkages in chitin and chitodextrins.. Its function is as follows. Hydrolyzes chitin and may play a role in defense against fungal pathogens containing chitin. This chain is Chitinase 7 (Cht7), found in Oryza sativa subsp. indica (Rice).